The following is a 614-amino-acid chain: Maltose permease MAL61 (614 aa).

The tract at residues 1-48 (MKGLSSLINRKKDRNDSHLDEIENGVNATEFNSIEMEEQGKKSDFDLS) is disordered. The Cytoplasmic segment spans residues 1-108 (MKGLSSLINR…AAAWSLLVST (108 aa)). The segment covering 38–48 (EQGKKSDFDLS) has biased composition (basic and acidic residues). A helical membrane pass occupies residues 109-129 (TLIQEGYDTAILGAFYALPVF). Over 130 to 144 (QKKYGSLNSNTGDYE) the chain is Extracellular. Residues 145-165 (ISVSWQIGLCLCYMAGEIVGL) traverse the membrane as a helical segment. At 166 to 180 (QVTGPSVDYMGNRYT) the chain is on the cytoplasmic side. A helical transmembrane segment spans residues 181–201 (LIMALFFLAAFIFILYFCKSL). A topological domain (extracellular) is located at residue G202. A helical transmembrane segment spans residues 203–223 (MIAVGQALCGMPWGCFQCLTV). At 224-236 (SYASEICPLALRY) the chain is on the cytoplasmic side. The helical transmembrane segment at 237–257 (YLTTYSNLCWTFGQLFAAGIM) threads the bilayer. The Extracellular segment spans residues 258–272 (KNSQNKYANSELGYK). Residues 273–293 (LPFALQWIWPLPLAVGIFLAP) traverse the membrane as a helical segment. At 294 to 364 (ESPWWLVKKG…KDGINRRRTR (71 aa)) the chain is on the cytoplasmic side. Residues 365-385 (IACLCWIGQCSCGASLIGYST) form a helical membrane-spanning segment. At 386–398 (YFYEKAGVSTDTA) the chain is on the extracellular side. The chain crosses the membrane as a helical span at residues 399 to 419 (FTFSIIQYCLGIAATFVSWWA). Over 420-427 (SKYCGRFD) the chain is Cytoplasmic. A helical membrane pass occupies residues 428–448 (LYAFGLAFQAIMFFIIGGLGC). Residues 449–460 (SDTHGAKMGSGA) lie on the Extracellular side of the membrane. A helical membrane pass occupies residues 461–481 (LLMVVAFFYNLGIAPVVFCLV). The Cytoplasmic portion of the chain corresponds to 482–493 (SEMPSSRLRTKT). Residues 494 to 514 (IILARNAYNVIQVVVTVLIMY) traverse the membrane as a helical segment. At 515-526 (QLNSEKWNWGAK) the chain is on the extracellular side. The helical transmembrane segment at 527–547 (SGFFWGGFCLATLAWAVVDLP) threads the bilayer. Over 548–614 (ETAGRTFIEI…GRSTPSVVNK (67 aa)) the chain is Cytoplasmic. The tract at residues 594 to 614 (KEDLETSVVDEGRSTPSVVNK) is disordered.

Belongs to the major facilitator superfamily. Sugar transporter (TC 2.A.1.1) family.

The protein localises to the membrane. Transporter for maltose. In Saccharomyces cerevisiae (Baker's yeast), this protein is Maltose permease MAL61 (MAL61).